Consider the following 108-residue polypeptide: Nucleoid-associated protein BPP1222 (108 aa).

The disordered stretch occupies residues T86–F108. The segment covering P99–F108 has biased composition (pro residues).

It belongs to the YbaB/EbfC family. Homodimer.

It is found in the cytoplasm. It localises to the nucleoid. Binds to DNA and alters its conformation. May be involved in regulation of gene expression, nucleoid organization and DNA protection. The protein is Nucleoid-associated protein BPP1222 of Bordetella parapertussis (strain 12822 / ATCC BAA-587 / NCTC 13253).